Reading from the N-terminus, the 408-residue chain is MELVQPFSGFLVYDLKQTPEDFQVEEILPSDLIQKTGKWMIFRLQKSGWNTLDALLRISKESKVSIFEIGYAGKKDRHASTSQYISCQKPLRVPKELTKVIQLDKIGFSKKSLSTELNVGNRFQLVLRNLLEKEIESIRNNFEKITKNGFINYYDSQRFSRFHSEFRLPILPFFKGDAETCLKLILTDPFPGEKKQARDRKKILYDLWGNWSQCEKWSKSKLEKNIFSNLKKEKKPTQKTYSDLILRFPEEELLMLVSSFQSLIWNEFVSEIFISDNFTGVWIKTKTGPLFFPGESSIQSVPFSKNLPVPGNPGIYKLEYSKKEIDTLKKILNQNGLTESVLDSSPFPIIKMNSFERKVRILPNDFQIGDFEEDDQHPGKRKVKISFRLPSGVYATMLIKRLMLRSRI.

Catalysis depends on Asp76, which acts as the Nucleophile. Residues 149-362 (GFINYYDSQR…NSFERKVRIL (214 aa)) enclose the TRUD domain.

This sequence belongs to the pseudouridine synthase TruD family.

It carries out the reaction uridine(13) in tRNA = pseudouridine(13) in tRNA. Its function is as follows. Responsible for synthesis of pseudouridine from uracil-13 in transfer RNAs. In Leptospira interrogans serogroup Icterohaemorrhagiae serovar Lai (strain 56601), this protein is tRNA pseudouridine synthase D.